The following is a 170-amino-acid chain: F1 capsule antigen (170 aa).

The first 21 residues, 1 to 21 (MKKISSVIAIALFGTIATANA), serve as a signal peptide directing secretion. The tract at residues 100–150 (GNNHQFTTKVIGKDSRDFDISPKVNGENLVGDDVVLATGSQDFFVRSIGSK) is contains potential antigenic determinants that may stimulate T-cells.

Its subcellular location is the secreted. The protein localises to the capsule. The polypeptide is F1 capsule antigen (caf1) (Yersinia pestis).